We begin with the raw amino-acid sequence, 101 residues long: Protein Tat (101 aa).

Positions 1–24 (MEPVDPRLEPWKHPGSQPKTACTN) are interaction with human CREBBP. The segment at 1–48 (MEPVDPRLEPWKHPGSQPKTACTNCYCKKCCFHCQVCFITKGLGISYG) is transactivation. Zn(2+) is bound by residues C22, C25, and C27. The interval 22-37 (CTNCYCKKCCFHCQVC) is cysteine-rich. K28 carries the N6-acetyllysine; by host PCAF modification. Residues C30, H33, C34, and C37 each coordinate Zn(2+). Positions 38-48 (FITKGLGISYG) are core. The span at 48 to 57 (GRKKRRQRRR) shows a compositional bias: basic residues. Residues 48-101 (GRKKRRQRRRAPPDSEVHQVSLPKQPASQPQGDPTGPKESKKKVERETETDPVH) form a disordered region. A Nuclear localization signal, RNA-binding (TAR), and protein transduction motif is present at residues 49 to 57 (RKKRRQRRR). Residues 49-86 (RKKRRQRRRAPPDSEVHQVSLPKQPASQPQGDPTGPKE) form an interaction with the host capping enzyme RNGTT region. An N6-acetyllysine; by host EP300 and GCN5L2 mark is found at K50 and K51. An asymmetric dimethylarginine; by host PRMT6 mark is found at R52 and R53. K71 participates in a covalent cross-link: Glycyl lysine isopeptide (Lys-Gly) (interchain with G-Cter in ubiquitin). Residues 83 to 101 (GPKESKKKVERETETDPVH) show a composition bias toward basic and acidic residues.

It belongs to the lentiviruses Tat family. Interacts with host CCNT1. Associates with the P-TEFb complex composed at least of Tat, P-TEFb (CDK9 and CCNT1), TAR RNA, RNA Pol II. Recruits the HATs CREBBP, TAF1/TFIID, EP300, PCAF and GCN5L2. Interacts with host KAT5/Tip60; this interaction targets the latter to degradation. Interacts with the host deacetylase SIRT1. Interacts with host capping enzyme RNGTT; this interaction stimulates RNGTT. Binds to host KDR, and to the host integrins ITGAV/ITGB3 and ITGA5/ITGB1. Interacts with host KPNB1/importin beta-1 without previous binding to KPNA1/importin alpha-1. Interacts with EIF2AK2. Interacts with host nucleosome assembly protein NAP1L1; this interaction may be required for the transport of Tat within the nucleus, since the two proteins interact at the nuclear rim. Interacts with host C1QBP/SF2P32; this interaction involves lysine-acetylated Tat. Interacts with the host chemokine receptors CCR2, CCR3 and CXCR4. Interacts with host DPP4/CD26; this interaction may trigger an anti-proliferative effect. Interacts with host LDLR. Interacts with the host extracellular matrix metalloproteinase MMP1. Interacts with host PRMT6; this interaction mediates Tat's methylation. Interacts with, and is ubiquitinated by MDM2/Hdm2. Interacts with host PSMC3 and HTATIP2. Interacts with STAB1; this interaction may overcome SATB1-mediated repression of IL2 and IL2RA (interleukin) in T cells by binding to the same domain than HDAC1. Interacts (when acetylated) with human CDK13, thereby increasing HIV-1 mRNA splicing and promoting the production of the doubly spliced HIV-1 protein Nef. Interacts with host TBP; this interaction modulates the activity of transcriptional pre-initiation complex. Interacts with host RELA. Interacts with host PLSCR1; this interaction negatively regulates Tat transactivation activity by altering its subcellular distribution. Post-translationally, asymmetrical arginine methylation by host PRMT6 seems to diminish the transactivation capacity of Tat and affects the interaction with host CCNT1. In terms of processing, acetylation by EP300, CREBBP, GCN5L2/GCN5 and PCAF regulates the transactivation activity of Tat. EP300-mediated acetylation of Lys-50 promotes dissociation of Tat from the TAR RNA through the competitive binding to PCAF's bromodomain. In addition, the non-acetylated Tat's N-terminus can also interact with PCAF. PCAF-mediated acetylation of Lys-28 enhances Tat's binding to CCNT1. Lys-50 is deacetylated by SIRT1. Polyubiquitination by host MDM2 does not target Tat to degradation, but activates its transactivation function and fosters interaction with CCNT1 and TAR RNA. Post-translationally, phosphorylated by EIF2AK2 on serine and threonine residues adjacent to the basic region important for TAR RNA binding and function. Phosphorylation of Tat by EIF2AK2 is dependent on the prior activation of EIF2AK2 by dsRNA.

The protein localises to the host nucleus. It localises to the host nucleolus. The protein resides in the host cytoplasm. Its subcellular location is the secreted. Functionally, transcriptional activator that increases RNA Pol II processivity, thereby increasing the level of full-length viral transcripts. Recognizes a hairpin structure at the 5'-LTR of the nascent viral mRNAs referred to as the transactivation responsive RNA element (TAR) and recruits the cyclin T1-CDK9 complex (P-TEFb complex) that will in turn hyperphosphorylate the RNA polymerase II to allow efficient elongation. The CDK9 component of P-TEFb and other Tat-activated kinases hyperphosphorylate the C-terminus of RNA Pol II that becomes stabilized and much more processive. Other factors such as HTATSF1/Tat-SF1, SUPT5H/SPT5, and HTATIP2 are also important for Tat's function. Besides its effect on RNA Pol II processivity, Tat induces chromatin remodeling of proviral genes by recruiting the histone acetyltransferases (HATs) CREBBP, EP300 and PCAF to the chromatin. This also contributes to the increase in proviral transcription rate, especially when the provirus integrates in transcriptionally silent region of the host genome. To ensure maximal activation of the LTR, Tat mediates nuclear translocation of NF-kappa-B by interacting with host RELA. Through its interaction with host TBP, Tat may also modulate transcription initiation. Tat can reactivate a latently infected cell by penetrating in it and transactivating its LTR promoter. In the cytoplasm, Tat is thought to act as a translational activator of HIV-1 mRNAs. Its function is as follows. Extracellular circulating Tat can be endocytosed by surrounding uninfected cells via the binding to several surface receptors such as CD26, CXCR4, heparan sulfate proteoglycans (HSPG) or LDLR. Neurons are rarely infected, but they internalize Tat via their LDLR. Through its interaction with nuclear HATs, Tat is potentially able to control the acetylation-dependent cellular gene expression. Modulates the expression of many cellular genes involved in cell survival, proliferation or in coding for cytokines or cytokine receptors. Tat plays a role in T-cell and neurons apoptosis. Tat induced neurotoxicity and apoptosis probably contribute to neuroAIDS. Circulating Tat also acts as a chemokine-like and/or growth factor-like molecule that binds to specific receptors on the surface of the cells, affecting many cellular pathways. In the vascular system, Tat binds to ITGAV/ITGB3 and ITGA5/ITGB1 integrins dimers at the surface of endothelial cells and competes with bFGF for heparin-binding sites, leading to an excess of soluble bFGF. This is Protein Tat from Human immunodeficiency virus type 1 group M subtype B (isolate SF162) (HIV-1).